The primary structure comprises 128 residues: MPKSVIIPAGSSAPLAPFVPGTLADGVVYVSGTLAFDQHNNVLFADDPKAQTRHVLETIRKVIETAGGTMADVTFNSIFITDWKNYAAINEIYAEFFPGDKPARFYIQCGLVKPDALVEIATIAHIAK.

Belongs to the RutC family. Homotrimer.

It catalyses the reaction (Z)-3-aminoacrylate + H2O + H(+) = 3-oxopropanoate + NH4(+). Functionally, involved in pyrimidine catabolism. Catalyzes the deamination of 3-aminoacrylate to malonic semialdehyde, a reaction that can also occur spontaneously. RutC may facilitate the reaction and modulate the metabolic fitness, rather than catalyzing essential functions. In Shigella flexneri serotype X (strain 2002017), this protein is 3-aminoacrylate deaminase RutC.